A 394-amino-acid chain; its full sequence is MALTVNTNIASLNTQRNLNNSSASLNTSLQRLSTGSRINSAKDDAAGLQIANRLTSQVNGLNVATKNANDGISLAQTAEGALQQSTNILQRMRDLSLQSANGSNSDSERTALNGEVKQLQKELDRISNTTTFGGRKLLDGSFGVASFQVGSAANEIISVGIDEMSAESLNGTYFKADGGGAVTAATASGTVDIAIGITGGSAVNVKVDMKGNETAEQAAAKIAAAVNDANVGIGAFSDGDTISYVSKAGKDGSGAITSAVSGVVIADTGSTGVGTAAGVTPSATAFAKTNDTVAKIDISTAKGAQSAVLVIDEAIKQIDAQRADLGAVQNRFDNTINNLKNIGENVSAARGRIEDTDFAAETANLTKNQVLQQAGTAILAQANQLPQSVLSLLR.

The protein belongs to the bacterial flagellin family. In terms of processing, phosphorylated on tyrosine residue(s). Flagellin from strain 5939 but not from strain 170018 is glycosylated.

Its subcellular location is the secreted. The protein resides in the bacterial flagellum. Flagellin is the subunit protein which polymerizes to form the filaments of bacterial flagella. This is A-type flagellin (fliC) from Pseudomonas aeruginosa.